A 552-amino-acid polypeptide reads, in one-letter code: Glutathione reductase, chloroplastic/mitochondrial (552 aa).

A chloroplast and mitochondrion-targeting transit peptide spans 1–60; that stretch reads MNQAMATPLSLSCCSPTLTRSTLFFTKTFPFSRSFSTPLPLSTKTLISLSPPHRTFAVRA. Ser-83, Gly-84, Glu-103, Thr-120, Cys-121, and Lys-129 together coordinate FAD. Glutathione is bound at residue Ser-83. A disulfide bridge links Cys-121 with Cys-126. Residue Tyr-178 participates in glutathione binding. Gly-194 lines the FAD pocket. Residues Gly-254, Ile-257, Glu-260, Arg-277, Arg-283, and Gly-341 each contribute to the NADP(+) site. Residues Asp-382 and Thr-390 each coordinate FAD. An NADP(+)-binding site is contributed by Ala-420. His-515 is an FAD binding site. Catalysis depends on His-515, which acts as the Proton acceptor. A disordered region spans residues 527 to 552; the sequence is TPTRKVRKNQASQGKSDSKAKAVAGS.

The protein belongs to the class-I pyridine nucleotide-disulfide oxidoreductase family. As to quaternary structure, homodimer. Requires FAD as cofactor.

It localises to the plastid. The protein resides in the chloroplast. The protein localises to the mitochondrion. The catalysed reaction is 2 glutathione + NADP(+) = glutathione disulfide + NADPH + H(+). Catalyzes the reduction of glutathione disulfide (GSSG) to reduced glutathione (GSH). Maintains high levels of GSH in the chloroplast. The polypeptide is Glutathione reductase, chloroplastic/mitochondrial (GR) (Pisum sativum (Garden pea)).